Consider the following 245-residue polypeptide: Ureidoacrylate amidohydrolase RutB (245 aa).

The Proton acceptor role is filled by D41. K150 is a catalytic residue. C183 acts as the Nucleophile in catalysis.

The protein belongs to the isochorismatase family. RutB subfamily.

It carries out the reaction (Z)-3-ureidoacrylate + H2O + H(+) = (Z)-3-aminoacrylate + NH4(+) + CO2. The catalysed reaction is (Z)-3-ureidoacrylate + H2O = (Z)-3-aminoacrylate + carbamate + H(+). It catalyses the reaction (Z)-2-methylureidoacrylate + H2O + H(+) = (Z)-2-methylaminoacrylate + NH4(+) + CO2. Its function is as follows. Hydrolyzes ureidoacrylate to form aminoacrylate and carbamate. The carbamate hydrolyzes spontaneously, thereby releasing one of the nitrogen atoms of the pyrimidine ring as ammonia and one of its carbon atoms as CO2. This Pseudomonas syringae pv. syringae (strain B728a) protein is Ureidoacrylate amidohydrolase RutB.